Here is a 386-residue protein sequence, read N- to C-terminus: Dual-specificity RNA methyltransferase RlmN (386 aa).

The active-site Proton acceptor is glutamate 96. Residues 102 to 340 (ENDRATLCVS…VITRRTRGED (239 aa)) form the Radical SAM core domain. A disulfide bridge links cysteine 109 with cysteine 345. [4Fe-4S] cluster-binding residues include cysteine 116, cysteine 120, and cysteine 123. S-adenosyl-L-methionine is bound by residues 170-171 (GE), serine 202, 224-226 (SIH), and asparagine 302. The S-methylcysteine intermediate role is filled by cysteine 345.

This sequence belongs to the radical SAM superfamily. RlmN family. [4Fe-4S] cluster serves as cofactor.

The protein resides in the cytoplasm. The enzyme catalyses adenosine(2503) in 23S rRNA + 2 reduced [2Fe-2S]-[ferredoxin] + 2 S-adenosyl-L-methionine = 2-methyladenosine(2503) in 23S rRNA + 5'-deoxyadenosine + L-methionine + 2 oxidized [2Fe-2S]-[ferredoxin] + S-adenosyl-L-homocysteine. The catalysed reaction is adenosine(37) in tRNA + 2 reduced [2Fe-2S]-[ferredoxin] + 2 S-adenosyl-L-methionine = 2-methyladenosine(37) in tRNA + 5'-deoxyadenosine + L-methionine + 2 oxidized [2Fe-2S]-[ferredoxin] + S-adenosyl-L-homocysteine. Functionally, specifically methylates position 2 of adenine 2503 in 23S rRNA and position 2 of adenine 37 in tRNAs. m2A2503 modification seems to play a crucial role in the proofreading step occurring at the peptidyl transferase center and thus would serve to optimize ribosomal fidelity. This chain is Dual-specificity RNA methyltransferase RlmN, found in Colwellia psychrerythraea (strain 34H / ATCC BAA-681) (Vibrio psychroerythus).